The primary structure comprises 378 residues: MQSTIKPVEYDRPVAAGTVCGVGQAWAKVPDAPSAEERAALKARIKALLAREKAVLVAHYYVDAELQELADETGGCVADSLEMARFGRDHDAQTLIVAGVRFMGETAKILSPNKRILMPDLDATCSLDLGCPVDEFSAFCDAHPDRTVVVYANTSAAVKARADWMVTSSIGLEIVADLHARGEKIIWAPDRHLGSYIQKKTGADMLLWQGSCLVHDEFKGIELDLLRAEYPDAKVLVHPESPENVVAQADVVGSTTQLIDAAVKFDAKRFIVATDLGILHKMQLAAPGKTFIAAPTAGNSATCKSCAHCPWMAMNGLANLADVLERGHNEIFVDPAIGERARLPIDRMLEFAAAHKKRVQASGDLQRDQSLFANVGAA.

Iminosuccinate-binding residues include His-59 and Ser-80. [4Fe-4S] cluster is bound at residue Cys-125. Iminosuccinate-binding positions include 151 to 153 (YAN) and Ser-168. Cys-212 contributes to the [4Fe-4S] cluster binding site. Iminosuccinate is bound by residues 238–240 (HPE) and Thr-255. Cys-309 is a [4Fe-4S] cluster binding site.

The protein belongs to the quinolinate synthase family. Type 1 subfamily. The cofactor is [4Fe-4S] cluster.

The protein resides in the cytoplasm. The enzyme catalyses iminosuccinate + dihydroxyacetone phosphate = quinolinate + phosphate + 2 H2O + H(+). The protein operates within cofactor biosynthesis; NAD(+) biosynthesis; quinolinate from iminoaspartate: step 1/1. Its function is as follows. Catalyzes the condensation of iminoaspartate with dihydroxyacetone phosphate to form quinolinate. This Burkholderia cenocepacia (strain HI2424) protein is Quinolinate synthase.